A 275-amino-acid polypeptide reads, in one-letter code: MSNQELEAAIEAAWDARDSITPATTGATREAIEETLAALDGGGLRVAEKQADGSWHVNQWAKKAVLLGFRIKDMEIQSGGPQGGGWWDKVDSKFAGWGESQWKAAGFRAVPNCVVRKSAYIAPGVVLMPSFVNLGAYVDSGTMVDTWATVGSCAQIGRNVHLSGGVGIGGVLEPMQAGPTIIEDNCFIGARSEVVEGVIVREGAVLGMGVYIGQSTKIVDRETGEVMYGEVPPYSVVVSGSMPSTGGVSLYCAVIVKRVDERTRSKTGINELLRD.

Substrate is bound by residues arginine 108 and aspartate 145.

The protein belongs to the transferase hexapeptide repeat family. As to quaternary structure, homotrimer.

It is found in the cytoplasm. It catalyses the reaction (S)-2,3,4,5-tetrahydrodipicolinate + succinyl-CoA + H2O = (S)-2-succinylamino-6-oxoheptanedioate + CoA. It functions in the pathway amino-acid biosynthesis; L-lysine biosynthesis via DAP pathway; LL-2,6-diaminopimelate from (S)-tetrahydrodipicolinate (succinylase route): step 1/3. This Ruegeria pomeroyi (strain ATCC 700808 / DSM 15171 / DSS-3) (Silicibacter pomeroyi) protein is 2,3,4,5-tetrahydropyridine-2,6-dicarboxylate N-succinyltransferase.